The primary structure comprises 539 residues: Lysophospholipid acyltransferase LPEAT2 (539 aa).

Residues 93–113 (LVICLPIALIRLVLFAASLAV) traverse the membrane as a helical segment. The HXXXXD motif motif lies at 178-183 (HVSYIE). 3 consecutive EF-hand domains span residues 426-455 (KRIF…VLTQ), 457-492 (LFKQ…TIPN), and 493-528 (LNKD…NPLL). 10 residues coordinate Ca(2+): Asp-470, Asp-472, Asp-474, Tyr-476, Glu-481, Asp-506, Asp-508, Asp-510, Arg-512, and Asp-517.

This sequence belongs to the 1-acyl-sn-glycerol-3-phosphate acyltransferase family.

It localises to the golgi apparatus membrane. The protein resides in the late endosome membrane. The catalysed reaction is a 1-acyl-sn-glycero-3-phosphoethanolamine + an acyl-CoA = a 1,2-diacyl-sn-glycero-3-phosphoethanolamine + CoA. It carries out the reaction a 1-acyl-sn-glycero-3-phosphocholine + an acyl-CoA = a 1,2-diacyl-sn-glycero-3-phosphocholine + CoA. The enzyme catalyses a 1-acyl-sn-glycero-3-phospho-L-serine + an acyl-CoA = a 1,2-diacyl-sn-glycero-3-phospho-L-serine + CoA. It participates in lipid metabolism; phospholipid metabolism. In terms of biological role, possesses acyl-CoA-dependent lysophospholipid acyltransferase activity with a subset of lysophospholipids as substrates. Exhibits strong acylation activity on lysophosphatidylethanolamine (LPE), and lower activity on lysophosphatidylcholine (LPC) and lysophosphatidylserine (LPS). Exhibits acylation activity on both LPE and LPC. Has a preference for 18:1-LPE over 16:0-LPE as acceptor. Palmitoyl-CoA (16:0-CoA) is a better acyl donor than oleoyl-CoA (18:1-CoA). Among several different acyl-CoA species the best acyl donor is eicosanoyl-CoA (20:0-CoA). Activity is calcium-independent. Its activity is essential for maintaining adequate levels of phosphatidylethanolamine (PE), LPE and LPC in the cells, which is crucial for plant growth regulation. This Arabidopsis thaliana (Mouse-ear cress) protein is Lysophospholipid acyltransferase LPEAT2.